Here is a 285-residue protein sequence, read N- to C-terminus: Homeobox protein Hox-A4 (285 aa).

2 disordered regions span residues 19-70 (PFEE…APRA) and 94-130 (ASPG…TTPA). The segment covering 27 to 41 (GGPGGGDGAVGGGPG) has biased composition (gly residues). A compositionally biased stretch (low complexity) spans 44–70 (RPQSAPHLPAPNPHAARQPPAYYAPRA). The span at 106 to 118 (GAHPSPAPQPPVP) shows a compositional bias: pro residues. The short motif at 159-164 (VYPWMK) is the Antp-type hexapeptide element. Residues 180–239 (PKRSRTAYTRQQVLELEKEFHFNRYLTRRRRIEIAHTLCLSERQVKIWFQNRRMKWKKDH) constitute a DNA-binding region (homeobox). The tract at residues 238-285 (DHKLPNTKMRSSNTASAPAGPPGKAQTHSPHHHPHPLPGASTPIPSSI) is disordered.

The protein belongs to the Antp homeobox family. Deformed subfamily.

It localises to the nucleus. Sequence-specific transcription factor which is part of a developmental regulatory system that provides cells with specific positional identities on the anterior-posterior axis. Binds to sites in the 5'-flanking sequence of its coding region with various affinities. The consensus sequences of the high and low affinity binding sites are 5'-TAATGA[CG]-3' and 5'-CTAATTTT-3'. The protein is Homeobox protein Hox-A4 (Hoxa4) of Mus musculus (Mouse).